The chain runs to 822 residues: Ras GTPase-activating-like protein rgaA (822 aa).

The interval 1 to 36 (MNKEEYSDISDSESEEVHETNNHNEHEHEEEDDTPE) is disordered. A compositionally biased stretch (basic and acidic residues) spans 15–27 (EEVHETNNHNEHE). The stretch at 104–152 (EDKESDWIAEIQELKRNLVSEVRRNHTLERDLNRLDKRIALLIKNRGNI) forms a coiled coil. Residues 161–822 (GLKAPKHKGD…IHLLNKLFLY (662 aa)) are required for interaction to rac1A. Residues 234 to 477 (FLLLSLYRLS…GDIKNYLQEI (244 aa)) enclose the Ras-GAP domain.

Heterotetramer. Quaternary complex with activated rac1A, ctxA and ctxB. Interacts directly with rac1A and ctxA. Preferentially interacts with activated forms of rac1A, rac1B and rac1C. Interacts with racE.

It is found in the cytoplasm. The protein resides in the cell cortex. It localises to the cleavage furrow. Functionally, part of signaling pathway that is required for completion of cytokinesis. gapA and rgaA control cortexillin localization to the cleavage furrow and hence may be involved in cleavage of the midbody in the final stage of cytokinesis by regulating the actin cytoskeleton. Forms a complex by linking activated rac1A to ctxA. Assembly of this complex is necessary for the recruitment of cortexillin to the midzone of a dividing cell. Overexpression leads to the suppression of the formation of cellular projections containing F-actin and to a defect in cytokinesis. This is Ras GTPase-activating-like protein rgaA (rgaA) from Dictyostelium discoideum (Social amoeba).